The chain runs to 639 residues: 1-deoxy-D-xylulose-5-phosphate synthase (639 aa).

Residues H79 and G120 to S122 each bind thiamine diphosphate. D151 serves as a coordination point for Mg(2+). Thiamine diphosphate is bound by residues G152 to G153, N180, Y288, and E370. N180 lines the Mg(2+) pocket.

Belongs to the transketolase family. DXPS subfamily. Homodimer. Requires Mg(2+) as cofactor. It depends on thiamine diphosphate as a cofactor.

The enzyme catalyses D-glyceraldehyde 3-phosphate + pyruvate + H(+) = 1-deoxy-D-xylulose 5-phosphate + CO2. It functions in the pathway metabolic intermediate biosynthesis; 1-deoxy-D-xylulose 5-phosphate biosynthesis; 1-deoxy-D-xylulose 5-phosphate from D-glyceraldehyde 3-phosphate and pyruvate: step 1/1. Functionally, catalyzes the acyloin condensation reaction between C atoms 2 and 3 of pyruvate and glyceraldehyde 3-phosphate to yield 1-deoxy-D-xylulose-5-phosphate (DXP). The polypeptide is 1-deoxy-D-xylulose-5-phosphate synthase (Methylococcus capsulatus (strain ATCC 33009 / NCIMB 11132 / Bath)).